The following is a 201-amino-acid chain: LexA repressor (201 aa).

Residues 29–49 (VREICKAVGLSSTSSVHFHLK) constitute a DNA-binding region (H-T-H motif). Catalysis depends on for autocatalytic cleavage activity residues Ser-125 and Lys-162.

This sequence belongs to the peptidase S24 family. Homodimer.

The enzyme catalyses Hydrolysis of Ala-|-Gly bond in repressor LexA.. Its function is as follows. Represses a number of genes involved in the response to DNA damage (SOS response), including recA and lexA. In the presence of single-stranded DNA, RecA interacts with LexA causing an autocatalytic cleavage which disrupts the DNA-binding part of LexA, leading to derepression of the SOS regulon and eventually DNA repair. This is LexA repressor from Clostridium botulinum (strain ATCC 19397 / Type A).